Here is a 577-residue protein sequence, read N- to C-terminus: Probable cytochrome c biosynthesis protein (577 aa).

This sequence belongs to the CcmF/CycK/Ccl1/NrfE/CcsA family.

The protein resides in the mitochondrion. In terms of biological role, could be involved in assembly and maturation of cytochromes c. May play a role in guidance of apocytochromes and heme groups for the covalent linkage introduced by the cytochrome-c-heme lyase. The chain is Probable cytochrome c biosynthesis protein from Oenothera berteroana (Bertero's evening primrose).